The chain runs to 476 residues: Elongation factor Tu, chloroplastic (476 aa).

Residues 1 to 67 (MAISAPAACS…QSTRRSFTVR (67 aa)) constitute a chloroplast transit peptide. The region spanning 77–281 (KPHVNIGTIG…AVDDYIPIPQ (205 aa)) is the tr-type G domain. A G1 region spans residues 86–93 (GHVDHGKT). 86-93 (GHVDHGKT) provides a ligand contact to GTP. Thr-94 bears the Phosphothreonine mark. The G2 stretch occupies residues 127–131 (GITIN). Residues 148-151 (DCPG) form a G3 region. Residues 148 to 152 (DCPGH) and 203 to 206 (NKED) contribute to the GTP site. Residues 203 to 206 (NKED) are G4. The G5 stretch occupies residues 241–243 (SAL).

Belongs to the TRAFAC class translation factor GTPase superfamily. Classic translation factor GTPase family. EF-Tu/EF-1A subfamily. Interacts with PI5K2. Interacts with APD2.

Its subcellular location is the plastid. It localises to the chloroplast. In terms of biological role, this protein promotes the GTP-dependent binding of aminoacyl-tRNA to the A-site of ribosomes during protein biosynthesis. The chain is Elongation factor Tu, chloroplastic (TUFA) from Arabidopsis thaliana (Mouse-ear cress).